An 85-amino-acid polypeptide reads, in one-letter code: uncharacterized protein (85 aa).

The segment at 1–85 (MRWRPSSWSA…DQEQCGQHCR (85 aa)) is disordered. A compositionally biased stretch (basic and acidic residues) spans 47–61 (ASVEGEGGRHADRHG).

This is an uncharacterized protein from Streptomyces lividans.